Consider the following 89-residue polypeptide: Small ribosomal subunit protein uS15 (89 aa).

Belongs to the universal ribosomal protein uS15 family. In terms of assembly, part of the 30S ribosomal subunit. Forms a bridge to the 50S subunit in the 70S ribosome, contacting the 23S rRNA.

One of the primary rRNA binding proteins, it binds directly to 16S rRNA where it helps nucleate assembly of the platform of the 30S subunit by binding and bridging several RNA helices of the 16S rRNA. Its function is as follows. Forms an intersubunit bridge (bridge B4) with the 23S rRNA of the 50S subunit in the ribosome. This Paraburkholderia phymatum (strain DSM 17167 / CIP 108236 / LMG 21445 / STM815) (Burkholderia phymatum) protein is Small ribosomal subunit protein uS15.